Reading from the N-terminus, the 68-residue chain is Large ribosomal subunit protein bL33c (68 aa).

This sequence belongs to the bacterial ribosomal protein bL33 family.

It localises to the plastid. Its subcellular location is the chloroplast. The polypeptide is Large ribosomal subunit protein bL33c (Piper cenocladum (Ant piper)).